Here is a 381-residue protein sequence, read N- to C-terminus: Cytochrome b (381 aa).

4 helical membrane-spanning segments follow: residues 34 to 54 (FGSL…FLAM), 78 to 99 (WLIR…YLHI), 114 to 134 (WNIG…GYVL), and 179 to 199 (FFAF…IHLL). 2 residues coordinate heme b: H84 and H98. H183 and H197 together coordinate heme b. An a ubiquinone-binding site is contributed by H202. The next 4 helical transmembrane spans lie at 227–247 (YKDI…TLFI), 289–309 (LGGV…PLLQ), 321–341 (MTQI…WIGG), and 348–368 (FIMV…IIIP).

This sequence belongs to the cytochrome b family. As to quaternary structure, the cytochrome bc1 complex contains 3 respiratory subunits (MT-CYB, CYC1 and UQCRFS1), 2 core proteins (UQCRC1 and UQCRC2) and probably 6 low-molecular weight proteins. Heme b is required as a cofactor.

Its subcellular location is the mitochondrion inner membrane. Functionally, component of the ubiquinol-cytochrome c reductase complex (complex III or cytochrome b-c1 complex) that is part of the mitochondrial respiratory chain. The b-c1 complex mediates electron transfer from ubiquinol to cytochrome c. Contributes to the generation of a proton gradient across the mitochondrial membrane that is then used for ATP synthesis. The protein is Cytochrome b (mt-cyb) of Galeocerdo cuvier (Tiger shark).